The chain runs to 310 residues: MSDTNNHSKNIIHRILTEQINLTSNELDTKSTKEIVNIFSEADKEPQKAVERVIPELINAIDEITSRLKSNGRLFYIGTGTSGRLGVLDASECPPTFCTNPDLVQGIIAGGISSLTTSSEHLEDVSEIAISDLKDRNFSYRDVLIGITASGRTPYVLGALNYSKSISALTISISSVPERDSTLDNDIDIRLITGPEILAGSTRLKAGTATKMALNIISTSVMIKLGKVYGNRMIDLSVSNDKLLDRAIGILFDIGSVDKVTAVQLLKKTNGSVKLSLLIALSGMDVIDAKQLLNDSKGNLRTALIRVKGN.

Residues 64–227 form the SIS domain; the sequence is ITSRLKSNGR…STSVMIKLGK (164 aa). Glu-92 acts as the Proton donor in catalysis. Glu-123 is a catalytic residue.

Belongs to the GCKR-like family. MurNAc-6-P etherase subfamily. As to quaternary structure, homodimer.

It catalyses the reaction N-acetyl-D-muramate 6-phosphate + H2O = N-acetyl-D-glucosamine 6-phosphate + (R)-lactate. Its pathway is amino-sugar metabolism; N-acetylmuramate degradation. Functionally, specifically catalyzes the cleavage of the D-lactyl ether substituent of MurNAc 6-phosphate, producing GlcNAc 6-phosphate and D-lactate. The sequence is that of N-acetylmuramic acid 6-phosphate etherase from Prochlorococcus marinus (strain NATL2A).